The sequence spans 342 residues: Methionyl-tRNA formyltransferase (342 aa).

110–113 (SLLP) contacts (6S)-5,6,7,8-tetrahydrofolate.

It belongs to the Fmt family.

It catalyses the reaction L-methionyl-tRNA(fMet) + (6R)-10-formyltetrahydrofolate = N-formyl-L-methionyl-tRNA(fMet) + (6S)-5,6,7,8-tetrahydrofolate + H(+). Functionally, attaches a formyl group to the free amino group of methionyl-tRNA(fMet). The formyl group appears to play a dual role in the initiator identity of N-formylmethionyl-tRNA by promoting its recognition by IF2 and preventing the misappropriation of this tRNA by the elongation apparatus. The sequence is that of Methionyl-tRNA formyltransferase from Synechococcus sp. (strain CC9311).